A 93-amino-acid polypeptide reads, in one-letter code: Alpha-defensin 1 (93 aa).

A signal peptide spans 1–19; the sequence is MKKLVLLFALVLLGFQVQA. Positions 20-58 are excised as a propeptide; sequence DSIQNTDEETKTEEQPGEEDQAVSVSFGDPEGTSLQEES. The interval 24 to 54 is disordered; that stretch reads NTDEETKTEEQPGEEDQAVSVSFGDPEGTSL. Cystine bridges form between Cys-64–Cys-92, Cys-66–Cys-81, and Cys-71–Cys-91.

The protein belongs to the alpha-defensin family. In terms of tissue distribution, paneth cells of the small bowel.

Its subcellular location is the secreted. In terms of biological role, probably contributes to the antimicrobial barrier function of the small bowel mucosa. Has antibacterial activity against attenuated mutants of S.typhimurium. This Mus musculus (Mouse) protein is Alpha-defensin 1 (Defa1).